The following is a 670-amino-acid chain: DNA ligase (670 aa).

Residues 32–36 (DAEYD), 81–82 (SL), and Glu113 contribute to the NAD(+) site. The active-site N6-AMP-lysine intermediate is the Lys115. Arg136, Glu173, Lys290, and Lys314 together coordinate NAD(+). Residues Cys406, Cys409, Cys424, and Cys430 each coordinate Zn(2+). Residues 592-670 (EIDSPFAGKT…EQEMMRLLGE (79 aa)) form the BRCT domain.

This sequence belongs to the NAD-dependent DNA ligase family. LigA subfamily. It depends on Mg(2+) as a cofactor. Mn(2+) serves as cofactor.

The catalysed reaction is NAD(+) + (deoxyribonucleotide)n-3'-hydroxyl + 5'-phospho-(deoxyribonucleotide)m = (deoxyribonucleotide)n+m + AMP + beta-nicotinamide D-nucleotide.. In terms of biological role, DNA ligase that catalyzes the formation of phosphodiester linkages between 5'-phosphoryl and 3'-hydroxyl groups in double-stranded DNA using NAD as a coenzyme and as the energy source for the reaction. It is essential for DNA replication and repair of damaged DNA. In Erwinia tasmaniensis (strain DSM 17950 / CFBP 7177 / CIP 109463 / NCPPB 4357 / Et1/99), this protein is DNA ligase.